The sequence spans 440 residues: NADH-quinone oxidoreductase subunit D 2 (440 aa).

Belongs to the complex I 49 kDa subunit family. As to quaternary structure, NDH-1 is composed of 14 different subunits. Subunits NuoB, C, D, E, F, and G constitute the peripheral sector of the complex.

The protein resides in the cell membrane. It carries out the reaction a quinone + NADH + 5 H(+)(in) = a quinol + NAD(+) + 4 H(+)(out). In terms of biological role, NDH-1 shuttles electrons from NADH, via FMN and iron-sulfur (Fe-S) centers, to quinones in the respiratory chain. The immediate electron acceptor for the enzyme in this species is believed to be a menaquinone. Couples the redox reaction to proton translocation (for every two electrons transferred, four hydrogen ions are translocated across the cytoplasmic membrane), and thus conserves the redox energy in a proton gradient. The sequence is that of NADH-quinone oxidoreductase subunit D 2 from Streptomyces coelicolor (strain ATCC BAA-471 / A3(2) / M145).